The chain runs to 451 residues: UDP-glucosyltransferase 74AE2 (451 aa).

H17 serves as the catalytic Proton acceptor. An anthocyanidin is bound at residue H17. D108 serves as the catalytic Charge relay. The UDP-alpha-D-glucose site is built by T130, Q330, H345, W348, N349, S350, E353, D369, and Q370.

The protein belongs to the UDP-glycosyltransferase family. Expressed at higher levels in roots than in leaves.

The catalysed reaction is (20S)-ginsenoside C-K + UDP-alpha-D-glucose = (20S)-ginsenoside F2 + UDP + H(+). It catalyses the reaction (20S)-protopanaxadiol + UDP-alpha-D-glucose = (20S)-ginsenoside Rh2 + UDP + H(+). Its pathway is secondary metabolite biosynthesis; terpenoid biosynthesis. Its function is as follows. Component of the dammarane-type triterpene saponins (e.g. PPD-type ginsenosides or panaxosides) biosynthetic pathway. Glycosyltransferase that catalyzes the biosynthesis of ginsenoside Rh2 from protopanaxadiol (PPD) and the conversion of compound K to ginsenoside F2. The protein is UDP-glucosyltransferase 74AE2 of Panax ginseng (Korean ginseng).